The primary structure comprises 913 residues: Ubiquitin carboxyl-terminal hydrolase 20 (913 aa).

Residues 6-111 (DLCPHLDSIG…GSSKFSEQDS (106 aa)) form a UBP-type zinc finger. Zn(2+) contacts are provided by cysteine 8, histidine 10, cysteine 30, cysteine 33, cysteine 43, cysteine 48, cysteine 53, histidine 60, histidine 64, histidine 70, cysteine 83, and cysteine 86. Residues serine 111, serine 131, and serine 133 each carry the phosphoserine modification. The 541-residue stretch at 144-684 (TGMKNLGNSC…EGYVLFYRKS (541 aa)) folds into the USP domain. Cysteine 153 serves as the catalytic Nucleophile. The disordered stretch occupies residues 256 to 414 (LTEARDSDSS…SSSPPRASPV (159 aa)). Threonine 257 is subject to Phosphothreonine. Positions 258–278 (EARDSDSSDTDEKREGDRSPS) are enriched in basic and acidic residues. Residue serine 304 is modified to Phosphoserine. A compositionally biased stretch (basic and acidic residues) spans 315–331 (EASRAISEKERMKDRKF). Position 367 is a phosphoserine (serine 367). Residue threonine 376 is modified to Phosphothreonine. 2 positions are modified to phosphoserine: serine 407 and serine 412. Histidine 642 serves as the catalytic Proton acceptor. DUSP domains lie at 686–779 (EEAV…LYVC) and 788–891 (ALAK…RQSV).

It belongs to the peptidase C19 family. USP20/USP33 subfamily. Interacts with VHL, leading to its ubiquitination and subsequent degradation. Interacts with CCP110. Interacts with DIO2. Interacts with HIF1A. Interacts with ADRB2. Interacts with USP18. In terms of processing, ubiquitinated via a VHL-dependent pathway for proteasomal degradation.

It is found in the cytoplasm. Its subcellular location is the endoplasmic reticulum. It localises to the perinuclear region. The protein resides in the cytoskeleton. The protein localises to the microtubule organizing center. It is found in the centrosome. The enzyme catalyses Thiol-dependent hydrolysis of ester, thioester, amide, peptide and isopeptide bonds formed by the C-terminal Gly of ubiquitin (a 76-residue protein attached to proteins as an intracellular targeting signal).. Functionally, deubiquitinating enzyme that plays a role in many cellular processes including autophagy, cellular antiviral response or membrane protein biogenesis. Attenuates TLR4-mediated NF-kappa-B signaling by cooperating with beta-arrestin-2/ARRB2 and inhibiting TRAF6 autoubiquitination. Promotes cellular antiviral responses by deconjugating 'Lys-33' and 'Lys-48'-linked ubiquitination of STING1 leading to its stabilization. Plays an essential role in autophagy induction by regulating the ULK1 stability through deubiquitination of ULK1. Acts as a positive regulator for NF-kappa-B activation by TNF-alpha through deubiquitinating 'Lys-48'-linked polyubiquitination of SQSTM1, leading to its increased stability. Acts as a regulator of G-protein coupled receptor (GPCR) signaling by mediating the deubiquitination beta-2 adrenergic receptor (ADRB2). Plays a central role in ADRB2 recycling and resensitization after prolonged agonist stimulation by constitutively binding ADRB2, mediating deubiquitination of ADRB2 and inhibiting lysosomal trafficking of ADRB2. Upon dissociation, it is probably transferred to the translocated beta-arrestins, possibly leading to beta-arrestins deubiquitination and disengagement from ADRB2. This suggests the existence of a dynamic exchange between the ADRB2 and beta-arrestins. Deubiquitinates DIO2, thereby regulating thyroid hormone regulation. Deubiquitinates HIF1A, leading to stabilize HIF1A and enhance HIF1A-mediated activity. Deubiquitinates MCL1, a pivotal member of the anti-apoptotic Bcl-2 protein family to regulate its stability. Within the endoplasmic reticulum, participates with USP33 in the rescue of post-translationally targeted membrane proteins that are inappropriately ubiquitinated by the cytosolic protein quality control in the cytosol. The sequence is that of Ubiquitin carboxyl-terminal hydrolase 20 (USP20) from Pongo abelii (Sumatran orangutan).